The sequence spans 232 residues: MDKEDLKRQAAARALEEVRSGMKLGLGTGSTARHFVELLGEKVRGGLDVIGVPTSEVTRADAERCGIRLTTLDEIDRLDLTVDGADEVDTRLELIKGGGGALLREKIVAAASDRMIVIADESKWVDCLGKFPLPVEVIPFGLAATRRAIEKAFTQVGAAGQLKLRDGEAGHAFVTDGGHWIVDAHLGRIPDAPRLAKLLSEIPGVVEHGLFIGIASTVVLAGTEGIRTVERA.

Residues 28–31, 83–86, and 96–99 each bind substrate; these read TGST, DGAD, and KGGG. The active-site Proton acceptor is Glu-105. Residue Lys-123 coordinates substrate.

The protein belongs to the ribose 5-phosphate isomerase family. As to quaternary structure, homodimer.

The catalysed reaction is aldehydo-D-ribose 5-phosphate = D-ribulose 5-phosphate. It functions in the pathway carbohydrate degradation; pentose phosphate pathway; D-ribose 5-phosphate from D-ribulose 5-phosphate (non-oxidative stage): step 1/1. Its function is as follows. Catalyzes the reversible conversion of ribose-5-phosphate to ribulose 5-phosphate. This chain is Ribose-5-phosphate isomerase A, found in Rhodopseudomonas palustris (strain BisB5).